The following is a 578-amino-acid chain: Phosphatase DCR2 (578 aa).

Residue 116 to 123 (GRRWFGKS) participates in ATP binding.

The protein resides in the cytoplasm. Its function is as follows. Required for cell cycle progression. Has a role in the completion of START. The sequence is that of Phosphatase DCR2 (DCR2) from Saccharomyces cerevisiae (strain ATCC 204508 / S288c) (Baker's yeast).